A 420-amino-acid polypeptide reads, in one-letter code: MAKELQKWVVMVTAQTPTNIAVIKYWGKRDETLILPINDSISVTLDPDHLCTTTTVSVSPSFEQDRMWLNGKEISLLGGRFQSCLREIRSRACDLEDEKKGIKIKKMDWEKLRLHIASYNNFPTAAGLASSAAGLACFVFALAKLMNLNEDNGQLSAIARRGSGSACRSLYGGFVKWIMGKEENGSDSIAFQLADEKHWDDLVIVIAVVSARQKETSSTTGMQDSCKTSMLIQHRAKEVVPKRIIQMEDAIEKRDFPSFARLACADSNQFHAVCLDTSPPIFYMNDTSHKIISCVEKWNRSVGTPQVAYTFDAGPNAVLIARDRKIAALLLRRLLFHFPPTFQHCLNSYVIGDKSILQDVGVQDMKDIESLPPPPEIKDNIPAQKSNGDVSYFICTRPGRGPVLLPDSGALLNPETGLPK.

25-28 provides a ligand contact to (R)-5-diphosphomevalonate; it reads YWGK. Residues 42–50 carry the Peroxisomal targeting signal PTS2 motif; sequence SVTLDPDHL. Residues arginine 80, 163–168, and threonine 219 each bind (R)-5-diphosphomevalonate; that span reads SGSACR.

The protein belongs to the diphosphomevalonate decarboxylase family. Homodimer.

It is found in the peroxisome. It catalyses the reaction (R)-5-diphosphomevalonate + ATP = isopentenyl diphosphate + ADP + phosphate + CO2. It functions in the pathway isoprenoid biosynthesis; isopentenyl diphosphate biosynthesis via mevalonate pathway; isopentenyl diphosphate from (R)-mevalonate: step 3/3. Performs the first committed step in the biosynthesis of isoprene-containing compounds such as sterols and terpenoids. Component of the triterpenes (e.g. ginsenosides or panaxosides) and phytosterols biosynthetic pathways. Promotes the accumulation of stigmasterol and beta-sitosterol. The chain is Diphosphomevalonate decarboxylase 2 from Panax ginseng (Korean ginseng).